The chain runs to 490 residues: Probable cytosol aminopeptidase (490 aa).

Positions 255 and 260 each coordinate Mn(2+). The active site involves lysine 267. Residues aspartate 278, aspartate 337, and glutamate 339 each coordinate Mn(2+). The active site involves arginine 341.

Belongs to the peptidase M17 family. Mn(2+) is required as a cofactor.

The protein localises to the cytoplasm. It carries out the reaction Release of an N-terminal amino acid, Xaa-|-Yaa-, in which Xaa is preferably Leu, but may be other amino acids including Pro although not Arg or Lys, and Yaa may be Pro. Amino acid amides and methyl esters are also readily hydrolyzed, but rates on arylamides are exceedingly low.. The catalysed reaction is Release of an N-terminal amino acid, preferentially leucine, but not glutamic or aspartic acids.. Functionally, presumably involved in the processing and regular turnover of intracellular proteins. Catalyzes the removal of unsubstituted N-terminal amino acids from various peptides. The protein is Probable cytosol aminopeptidase of Gluconobacter oxydans (strain 621H) (Gluconobacter suboxydans).